The following is a 513-amino-acid chain: MNKFLALLFVLALFANIAFSCEGHPEHDHGDGDHEHDHDESFVKILDSDNFHNSVSEHDVTLVMFYAPWCGHCKTLKPLYEEAAKQLSANKKIAIAKVDCTQHEQLCKQNKVQGYPTLVVFKNGKAEPYEGDRTTKSIVQTLEEELKPTISTLESNEDIEEFKKQHPISVVGFFDNDHDDRFKLFSELAGNNKKSAKFAVVIDKDFSKEHVESTPNVVLFRSFDEPTVAHKGEFDSESLIKFIKGNSVPLLGEINRNTYKKYESIAVPLAYLFIDSTQDNTQVLEDVKKIATSQKGNAVFCWVDMKKFPQQATHMGLSGKVVPAISVDSVANKARYNFDEKETFSFDTVSKWIQDVIGGKVSPFVKSQPEPESNDAPVKVAVGTTFKKLVLDSPKDVLVEFYAPWCGHCKNLAPIYDKLGEYLKDVESVSIVKIDADSNDVPSDIEIRGYPTIMLFKADDKENPISYEGQRNDHMNFVEFIQDNAAIEFKLPSSQTDDNVESKKDSSAKHDEL.

The signal sequence occupies residues 1 to 20 (MNKFLALLFVLALFANIAFS). Thioredoxin domains lie at 21 to 147 (CEGH…EELK) and 355 to 486 (DVIG…DNAA). Residues Cys70, Cys73, Cys406, and Cys409 each act as nucleophile in the active site. 2 disulfides stabilise this stretch: Cys70–Cys73 and Cys406–Cys409. Positions 491-513 (LPSSQTDDNVESKKDSSAKHDEL) are disordered. Residues 500–513 (VESKKDSSAKHDEL) show a composition bias toward basic and acidic residues. The Prevents secretion from ER motif lies at 510–513 (HDEL).

Belongs to the protein disulfide isomerase family.

It localises to the endoplasmic reticulum lumen. It carries out the reaction Catalyzes the rearrangement of -S-S- bonds in proteins.. Its function is as follows. Participates in the folding of proteins containing disulfide bonds, may be involved in glycosylation, prolyl hydroxylation and triglyceride transfer. The polypeptide is Protein disulfide-isomerase 2 (pdi2) (Dictyostelium discoideum (Social amoeba)).